The chain runs to 216 residues: Urease operon 23 kDa accessory protein (216 aa).

Functionally, involved in the expression of hydrogenase activity. May be a regulatory gene affecting the expression of the hydrogenase operon or could be involved in the process of nickel incorporation into the hydrogenase apoenzyme. The polypeptide is Urease operon 23 kDa accessory protein (Rhizobium meliloti (strain 1021) (Ensifer meliloti)).